A 288-amino-acid polypeptide reads, in one-letter code: Prepilin leader peptidase/N-methyltransferase (288 aa).

Residues 14–34 (FITLATVLGLLVGSFLNVVVY) traverse the membrane as a helical segment. The Zn(2+) site is built by Cys71, Cys74, Cys96, and Cys99. 6 consecutive transmembrane segments (helical) span residues 103-123 (ISVRYPLVEVGCALLSMVVAW), 127-147 (ASVEALVLLPLTWSLLALSLI), 158-178 (IVLPGLWLGLIVNYFGVWVPL), 182-202 (VCGAVVGYLSLWTVYWLFKLV), 227-247 (VLPLTLLLSSVLGALVGVYLL), and 254-274 (MGTAMPFGPYLAIAGWIAVLW).

It belongs to the peptidase A24 family. Requires Zn(2+) as cofactor.

Its subcellular location is the cell inner membrane. It catalyses the reaction Typically cleaves a -Gly-|-Phe- bond to release an N-terminal, basic peptide of 5-8 residues from type IV prepilin, and then N-methylates the new N-terminal amino group, the methyl donor being S-adenosyl-L-methionine.. In terms of biological role, plays an essential role in type IV pili and type II pseudopili formation by proteolytically removing the leader sequence from substrate proteins and subsequently monomethylating the alpha-amino group of the newly exposed N-terminal phenylalanine. This chain is Prepilin leader peptidase/N-methyltransferase (pilD), found in Pseudomonas putida (Arthrobacter siderocapsulatus).